Here is an 81-residue protein sequence, read N- to C-terminus: Photosystem I iron-sulfur center (81 aa).

4Fe-4S ferredoxin-type domains are found at residues 2–31 (SHSVKIYDTCIGCTQCVRACPTDVLEMIPW) and 39–68 (IASAPRTEDCVGCKRCESACPTDFLSVRVY). [4Fe-4S] cluster is bound by residues C11, C14, C17, C21, C48, C51, C54, and C58.

The eukaryotic PSI reaction center is composed of at least 11 subunits. [4Fe-4S] cluster is required as a cofactor.

Its subcellular location is the plastid. The protein localises to the chloroplast thylakoid membrane. It catalyses the reaction reduced [plastocyanin] + hnu + oxidized [2Fe-2S]-[ferredoxin] = oxidized [plastocyanin] + reduced [2Fe-2S]-[ferredoxin]. Its function is as follows. Apoprotein for the two 4Fe-4S centers FA and FB of photosystem I (PSI); essential for photochemical activity. FB is the terminal electron acceptor of PSI, donating electrons to ferredoxin. The C-terminus interacts with PsaA/B/D and helps assemble the protein into the PSI complex. Required for binding of PsaD and PsaE to PSI. PSI is a plastocyanin-ferredoxin oxidoreductase, converting photonic excitation into a charge separation, which transfers an electron from the donor P700 chlorophyll pair to the spectroscopically characterized acceptors A0, A1, FX, FA and FB in turn. In Sorghum bicolor (Sorghum), this protein is Photosystem I iron-sulfur center.